Reading from the N-terminus, the 287-residue chain is Elongation factor Ts (287 aa).

The segment at 80-83 (TDFL) is involved in Mg(2+) ion dislocation from EF-Tu.

It belongs to the EF-Ts family.

It localises to the cytoplasm. Its function is as follows. Associates with the EF-Tu.GDP complex and induces the exchange of GDP to GTP. It remains bound to the aminoacyl-tRNA.EF-Tu.GTP complex up to the GTP hydrolysis stage on the ribosome. The protein is Elongation factor Ts of Pseudomonas putida (strain W619).